A 186-amino-acid chain; its full sequence is Guanylate kinase (186 aa).

In terms of domain architecture, Guanylate kinase-like spans 5-183 (GNLTVLTGPS…AFKEIEGFMG (179 aa)). 12 to 19 (GPSGVGKG) contributes to the ATP binding site.

It belongs to the guanylate kinase family.

Its subcellular location is the cytoplasm. It catalyses the reaction GMP + ATP = GDP + ADP. Functionally, essential for recycling GMP and indirectly, cGMP. The protein is Guanylate kinase of Prochlorococcus marinus (strain NATL2A).